The primary structure comprises 139 residues: Antitoxin HicB 2 (139 aa).

One can recognise an HTH cro/C1-type domain in the interval 87–137 (MLQTRTSNAELARLLGTRPQEIQRIVSLSHSTKIDTIANALNALGKHLELV). Residues 96–113 (ELARLLGTRPQEIQRIVS) constitute a DNA-binding region (H-T-H motif).

This sequence belongs to the HicB antitoxin family. In terms of assembly, probably forms a complex with the probable mRNA interferase HicA2 (its cognate toxin); when complexed with HicA inhibits the toxin activity.

In terms of biological role, antitoxin component of a type II toxin-antitoxin (TA) system. Functions as an mRNA interferase antitoxin preventing effects of the HicA 2 toxin. This Photorhabdus laumondii subsp. laumondii (strain DSM 15139 / CIP 105565 / TT01) (Photorhabdus luminescens subsp. laumondii) protein is Antitoxin HicB 2 (hicB2).